Here is a 185-residue protein sequence, read N- to C-terminus: Ribosome-recycling factor (185 aa).

The protein belongs to the RRF family.

Its subcellular location is the cytoplasm. In terms of biological role, responsible for the release of ribosomes from messenger RNA at the termination of protein biosynthesis. May increase the efficiency of translation by recycling ribosomes from one round of translation to another. The chain is Ribosome-recycling factor from Vibrio vulnificus (strain YJ016).